Consider the following 487-residue polypeptide: NADH-quinone oxidoreductase subunit N (487 aa).

Helical transmembrane passes span 7 to 27, 37 to 57, 81 to 101, 112 to 132, 166 to 186, 207 to 227, 237 to 257, 276 to 296, 307 to 327, 329 to 349, 373 to 393, 407 to 427, and 452 to 472; these read LTLI…ILIT, LVSI…APAL, FAKI…PAFF, PVLV…GDLI, FVLG…VYGF, ALFG…AVPF, GAPT…AVAL, IVIF…IGQT, INNV…GLSA, LTYL…LLML, LAWC…LLGF, DMVL…FYYI, and VLLI…TGWL.

The protein belongs to the complex I subunit 2 family. In terms of assembly, NDH-1 is composed of 14 different subunits. Subunits NuoA, H, J, K, L, M, N constitute the membrane sector of the complex.

The protein localises to the cell inner membrane. The enzyme catalyses a quinone + NADH + 5 H(+)(in) = a quinol + NAD(+) + 4 H(+)(out). NDH-1 shuttles electrons from NADH, via FMN and iron-sulfur (Fe-S) centers, to quinones in the respiratory chain. The immediate electron acceptor for the enzyme in this species is believed to be ubiquinone. Couples the redox reaction to proton translocation (for every two electrons transferred, four hydrogen ions are translocated across the cytoplasmic membrane), and thus conserves the redox energy in a proton gradient. This chain is NADH-quinone oxidoreductase subunit N, found in Erythrobacter litoralis (strain HTCC2594).